A 361-amino-acid polypeptide reads, in one-letter code: MSQNSLRLVEDKSVDKSKALEAALSQIERSFGKGSIMKLGSNENVIEIETISTGSLGLDIALGVGGLPKGRIIEIYGPESSGKTTLALQTIAESQKKGGICAFVDAEHALDPVYARKLGVDLQNLLISQPDTGEQALEITDTLVRSGAVDVLVVDSVAALTPRAEIEGEMGDSLPGLQARLMSQALRKLTASISKSNTMVIFINQIRMKIGVMFGSPETTTGGNALKFYASVRLDIRRIGSVKEREEVIGNQTRVKVVKNKMAPPFKQVEFDIMYGEGVSKTGELVDLGVKAGIVEKSGAWFSYNSQRLGQGGENAKTFLRDNPDLAREIELALRENAGLIADRFLQNGGPDADDGDGADM.

Residue 77–84 participates in ATP binding; that stretch reads GPESSGKT.

Belongs to the RecA family.

The protein localises to the cytoplasm. In terms of biological role, can catalyze the hydrolysis of ATP in the presence of single-stranded DNA, the ATP-dependent uptake of single-stranded DNA by duplex DNA, and the ATP-dependent hybridization of homologous single-stranded DNAs. It interacts with LexA causing its activation and leading to its autocatalytic cleavage. The protein is Protein RecA of Rhizobium etli.